Reading from the N-terminus, the 285-residue chain is Meiotically up-regulated gene 125 protein (285 aa).

The protein resides in the cytoplasm. The protein localises to the nucleus. Functionally, has a role in meiosis. The sequence is that of Meiotically up-regulated gene 125 protein (mug125) from Schizosaccharomyces pombe (strain 972 / ATCC 24843) (Fission yeast).